The chain runs to 270 residues: Regulatory protein RecX (270 aa).

The protein belongs to the RecX family.

It localises to the cytoplasm. Its function is as follows. Modulates RecA activity. The polypeptide is Regulatory protein RecX (Bacillus cytotoxicus (strain DSM 22905 / CIP 110041 / 391-98 / NVH 391-98)).